The primary structure comprises 689 residues: Glycine--tRNA ligase beta subunit (689 aa).

This sequence belongs to the class-II aminoacyl-tRNA synthetase family. Tetramer of two alpha and two beta subunits.

It localises to the cytoplasm. The catalysed reaction is tRNA(Gly) + glycine + ATP = glycyl-tRNA(Gly) + AMP + diphosphate. This is Glycine--tRNA ligase beta subunit from Salmonella arizonae (strain ATCC BAA-731 / CDC346-86 / RSK2980).